A 299-amino-acid polypeptide reads, in one-letter code: uncharacterized protein (299 aa).

8 helical membrane passes run 13–33 (ILFL…LHFM), 36–56 (AFVI…FLML), 79–99 (SFGI…VIII), 112–132 (TAIG…ISVI), 151–171 (ITSE…LFFI), 201–221 (FLIL…VILV), 241–261 (YVIL…MLLS), and 267–287 (PPGP…FLII).

The protein belongs to the ABC-3 integral membrane protein family.

Its subcellular location is the plastid. It localises to the cyanelle membrane. This is an uncharacterized protein from Cyanophora paradoxa.